The primary structure comprises 172 residues: Envelope protein UL45 (172 aa).

Over 1–27 (MAFRASGPAYQPLAPAASPARARVPAV) the chain is Intravirion. The helical; Signal-anchor for type II membrane protein transmembrane segment at 28 to 48 (AWIGVGAIVGAFALVAALVLV) threads the bilayer. Topologically, residues 49-172 (PPRSSWGLSP…TSIRNALGLP (124 aa)) are virion surface.

This sequence belongs to the herpesviridae HHV-1 UL45 family.

Its subcellular location is the virion membrane. Functionally, important virulence factor of HSV neurotropism. Seems to be required for glycoprotein B-induced fusion. Dispensable for growth in vitro. The chain is Envelope protein UL45 from Homo sapiens (Human).